A 433-amino-acid polypeptide reads, in one-letter code: Protein translocase subunit SecD (433 aa).

Transmembrane regions (helical) follow at residues 7–27, 257–277, 278–298, 300–320, 354–374, and 380–400; these read LAFL…GPKI, LIAG…AYRM, AGLI…LTFA, LHVV…GIAV, TIVD…IFGG, and GFAV…VLFA.

It belongs to the SecD/SecF family. SecD subfamily. Forms a complex with SecF. Part of the essential Sec protein translocation apparatus which comprises SecA, SecYEG and auxiliary proteins SecDF. Other proteins may also be involved.

The protein localises to the cell membrane. In terms of biological role, part of the Sec protein translocase complex. Interacts with the SecYEG preprotein conducting channel. SecDF uses the proton motive force (PMF) to complete protein translocation after the ATP-dependent function of SecA. The sequence is that of Protein translocase subunit SecD from Alicyclobacillus acidocaldarius subsp. acidocaldarius (strain ATCC 27009 / DSM 446 / BCRC 14685 / JCM 5260 / KCTC 1825 / NBRC 15652 / NCIMB 11725 / NRRL B-14509 / 104-IA) (Bacillus acidocaldarius).